A 379-amino-acid polypeptide reads, in one-letter code: Stimulator of interferon genes protein (379 aa).

Helical transmembrane passes span 18 to 38 (AKKAAFVLLSVCLVVLWDLGE) and 43 to 63 (ILQWLMLHLASLQLGLLFKGV). Residues cysteine 88 and cysteine 91 are each lipidated (S-palmitoyl cysteine). 2 consecutive transmembrane segments (helical) span residues 89–109 (LGCPIRCGTLLLLSCYFYTPF) and 114–134 (HLPFTWTLALLGLSQALSILL). A cyclic dinucleotide-binding domain (CBD) region spans residues 153–340 (LNVAQGMAWS…RHLKQEEKEE (188 aa)). Serine 162, tyrosine 167, arginine 238, and threonine 263 together coordinate 2',3'-cGAMP. 3',3'-c-di-GMP is bound by residues serine 162, tyrosine 167, 238-241 (RVYT), and threonine 263. Residues tyrosine 167, arginine 238, and threonine 263 each contribute to the 2',3'-cUAMP site. Positions 338 to 363 (KEEVTVDSARTSVMPDPSMLPQGPEL) are disordered. The C-terminal tail (CTT) stretch occupies residues 340-379 (EVTVDSARTSVMPDPSMLPQGPELLISSMDQPLPLRTDVF). Position 355 is a phosphoserine (serine 355). The pLxIS motif signature appears at 363 to 366 (LLIS). Serine 366 is modified (phosphoserine; by TBK1).

This sequence belongs to the STING family. Homodimer; forms a homodimer in absence of cyclic nucleotide (c-di-GMP or cGAMP). Homotetramer; in presence of cyclic nucleotide (c-di-GMP or cGAMP), forms tetramers and higher-order oligomers through side-by-side packing. Interacts (when phosphorylated) with IRF3; following activation and phosphorylation on the pLxIS motif by TBK1, recruits IRF3. Interacts with TBK1; when homodimer, leading to subsequent production of IFN-beta. Interacts (via transmembrane domain) with TMEM203. In terms of processing, phosphorylation by TBK1 leads to activation and production of IFN-beta. Following cyclic nucleotide (c-di-GMP or cGAMP)-binding, activation and translocation from the endoplasmic reticulum, STING1 is phosphorylated by TBK1 at Ser-366 in the pLxIS motif. The phosphorylated pLxIS motif constitutes an IRF3-binding motif, leading to recruitment of the transcription factor IRF3 to induce type-I interferons and other cytokines. In contrast, lacks phosphorylation site at position 358, leading to reduced production of type-I interferons and other cytokines.

Its subcellular location is the endoplasmic reticulum membrane. The protein localises to the cytoplasm. It localises to the perinuclear region. The protein resides in the endoplasmic reticulum-Golgi intermediate compartment membrane. It is found in the golgi apparatus membrane. Its subcellular location is the cytoplasmic vesicle. The protein localises to the autophagosome membrane. It localises to the mitochondrion outer membrane. The protein resides in the cell membrane. It catalyses the reaction H(+)(in) = H(+)(out). Facilitator of innate immune signaling that acts as a sensor of cytosolic DNA from bacteria and viruses and promotes low production of type I interferon (IFN-alpha and IFN-beta). Compared to other mammals, STING1-dependent type I interferon induction is strongly reduced in bats, suggesting that the cGAS-STING pathway promotes a limited inflammatory response. Innate immune response is triggered in response to non-CpG double-stranded DNA from viruses and bacteria delivered to the cytoplasm. Acts by binding cyclic dinucleotides: recognizes and binds cyclic di-GMP (c-di-GMP), a second messenger produced by bacteria, cyclic UMP-AMP (2',3'-cUAMP), and cyclic GMP-AMP (cGAMP), a messenger produced by CGAS in response to DNA virus in the cytosol. Upon binding to c-di-GMP, cUAMP or cGAMP, STING1 oligomerizes, translocates from the endoplasmic reticulum and is phosphorylated by TBK1 on the pLxIS motif, leading to recruitment and subsequent activation of the transcription factor IRF3 to induce expression of type I interferon and exert a potent anti-viral state. In addition to promote the production of type I interferons, plays a direct role in autophagy. Following cGAMP-binding, STING1 buds from the endoplasmic reticulum into COPII vesicles, which then form the endoplasmic reticulum-Golgi intermediate compartment (ERGIC). The ERGIC serves as the membrane source for WIPI2 recruitment and LC3 lipidation, leading to formation of autophagosomes that target cytosolic DNA or DNA viruses for degradation by the lysosome. Promotes autophagy by acting as a proton channel that directs proton efflux from the Golgi to facilitate MAP1LC3B/LC3B lipidation. The autophagy- and interferon-inducing activities can be uncoupled and autophagy induction is independent of TBK1 phosphorylation. This Pteronotus parnellii (Parnell's mustached bat) protein is Stimulator of interferon genes protein.